The sequence spans 323 residues: Lipoyl synthase (323 aa).

7 residues coordinate [4Fe-4S] cluster: C61, C66, C72, C87, C91, C94, and S300. Residues 73–289 (WDKKHATFMI…ETVAYSKGFL (217 aa)) form the Radical SAM core domain.

The protein belongs to the radical SAM superfamily. Lipoyl synthase family. Requires [4Fe-4S] cluster as cofactor.

The protein resides in the cytoplasm. It carries out the reaction [[Fe-S] cluster scaffold protein carrying a second [4Fe-4S](2+) cluster] + N(6)-octanoyl-L-lysyl-[protein] + 2 oxidized [2Fe-2S]-[ferredoxin] + 2 S-adenosyl-L-methionine + 4 H(+) = [[Fe-S] cluster scaffold protein] + N(6)-[(R)-dihydrolipoyl]-L-lysyl-[protein] + 4 Fe(3+) + 2 hydrogen sulfide + 2 5'-deoxyadenosine + 2 L-methionine + 2 reduced [2Fe-2S]-[ferredoxin]. Its pathway is protein modification; protein lipoylation via endogenous pathway; protein N(6)-(lipoyl)lysine from octanoyl-[acyl-carrier-protein]: step 2/2. Its function is as follows. Catalyzes the radical-mediated insertion of two sulfur atoms into the C-6 and C-8 positions of the octanoyl moiety bound to the lipoyl domains of lipoate-dependent enzymes, thereby converting the octanoylated domains into lipoylated derivatives. In Rhizobium etli (strain ATCC 51251 / DSM 11541 / JCM 21823 / NBRC 15573 / CFN 42), this protein is Lipoyl synthase.